A 246-amino-acid chain; its full sequence is Octanoyltransferase (246 aa).

The region spanning 38–213 (AQQSDEFWVL…FLAKRLGLTP (176 aa)) is the BPL/LPL catalytic domain. Substrate-binding positions include 77–84 (RGGQVTYH), 144–146 (SLG), and 157–159 (GLA). Residue Cys175 is the Acyl-thioester intermediate of the active site. Positions 225-246 (RQENVTTGGDPGSALTQQPERL) are disordered.

Belongs to the LipB family.

The protein resides in the cytoplasm. It catalyses the reaction octanoyl-[ACP] + L-lysyl-[protein] = N(6)-octanoyl-L-lysyl-[protein] + holo-[ACP] + H(+). Its pathway is protein modification; protein lipoylation via endogenous pathway; protein N(6)-(lipoyl)lysine from octanoyl-[acyl-carrier-protein]: step 1/2. In terms of biological role, catalyzes the transfer of endogenously produced octanoic acid from octanoyl-acyl-carrier-protein onto the lipoyl domains of lipoate-dependent enzymes. Lipoyl-ACP can also act as a substrate although octanoyl-ACP is likely to be the physiological substrate. The polypeptide is Octanoyltransferase (Alcanivorax borkumensis (strain ATCC 700651 / DSM 11573 / NCIMB 13689 / SK2)).